Consider the following 90-residue polypeptide: MKTAMLIAVLGFCAALCFVESSHEEEREAAVYLTDLVSKAESAIKRGIPCRCDKNSDELNGEQSYMNGNCGDGWKKCRSVNAIFNCCQRV.

Residues 1–21 (MKTAMLIAVLGFCAALCFVES) form the signal peptide. The propeptide occupies 22 to 44 (SHEEEREAAVYLTDLVSKAESAI). 3 disulfides stabilise this stretch: Cys50-Cys86, Cys52-Cys77, and Cys70-Cys87.

It belongs to the sea anemone sodium channel inhibitory toxin family.

It is found in the secreted. The protein resides in the nematocyst. In terms of biological role, cardioactive peptide that acts on voltage-gated sodium channels (hNav1.5/SCN5A) and voltage-gated potassium channels (Kv). The activity on sodium channels consists of inhibition on sodium current inactivation with no significant effect on current activation. This effect may be caused by direct interaction of the toxin with sodium channel site-3. The activity on potassium channels consists of a significant increase of the amplitude of the transient component of the potassium current, shifting the current threshold to more negative membrane potentials. These effects are concentration-dependent and reversible and may be due to a direct interaction between the toxin and the voltage-sensing domain of the channel. Physiologically, this toxin increases the amplitude of cardiomyocyte contraction and slows the late phase of the twitch relaxation velocity with no induction of spontaneous twitching. It increases action potential duration of cardiomyocytes with no effect on its threshold and on the cell resting potential. On insects, it shows neurotoxic activity to the blowfly larvae S.falculaty, causing an immediate spasm that progressed to body contraction and paralysis. This Exaiptasia diaphana (Tropical sea anemone) protein is Delta-aiptatoxin-Adi1a.